The primary structure comprises 305 residues: Mitochondrial uncoupling protein 2 (305 aa).

3 Solcar repeats span residues 10-104 (ISFL…VKTL), 114-205 (IPLY…IKET), and 214-297 (DSVL…VKKV). A run of 6 helical transmembrane segments spans residues 16–36 (FICS…LDTA), 73–93 (ISGL…YGGL), 120–140 (ILAA…TDLV), 179–199 (TGLG…LASY), 220–240 (LLAG…IDVV), and 270–290 (YKGF…MFLT).

It belongs to the mitochondrial carrier (TC 2.A.29) family.

The protein resides in the mitochondrion inner membrane. PUMPS are mitochondrial transporter proteins that create proton leaks across the inner mitochondrial membrane, thus uncoupling oxidative phosphorylation. This leads to a decrease in the efficiency of oxidative phosphorylation and an increase in heat production. May be involved in protecting plant cells against oxidative stress damage. In Arabidopsis thaliana (Mouse-ear cress), this protein is Mitochondrial uncoupling protein 2 (PUMP2).